The chain runs to 308 residues: Glutathione synthetase (308 aa).

Residues 120–304 form the ATP-grasp domain; sequence KLGALRFNNL…LADQVIARLL (185 aa). Position 146 to 202 (146 to 202) interacts with ATP; sequence AREQEEVVLKPLGGRAGQGLVRVAGAAPGLEALLELVTDQEQLPVMVQRFLPAVIEG. Residues Glu-275 and Asn-277 each contribute to the Mg(2+) site.

This sequence belongs to the prokaryotic GSH synthase family. Mg(2+) serves as cofactor. The cofactor is Mn(2+).

It carries out the reaction gamma-L-glutamyl-L-cysteine + glycine + ATP = glutathione + ADP + phosphate + H(+). It functions in the pathway sulfur metabolism; glutathione biosynthesis; glutathione from L-cysteine and L-glutamate: step 2/2. The chain is Glutathione synthetase from Prochlorococcus marinus (strain MIT 9313).